Reading from the N-terminus, the 977-residue chain is Synaptopodin 2-like protein (977 aa).

Residues 6–88 (EVLVTLSGGA…QLVLTVQRLA (83 aa)) enclose the PDZ domain. 3 disordered regions span residues 91-226 (GPVQ…GPLR), 317-352 (AGTGAEEEDGVPPTSESELDEEAFSDARSLTNQSDW), and 364-677 (AGSR…EDAL). A phosphoserine mark is found at Ser108 and Ser111. Residues 109 to 123 (PLSPEPPGAPVPQPL) are compositionally biased toward pro residues. Thr141 carries the post-translational modification Phosphothreonine. A phosphoserine mark is found at Ser143, Ser178, and Ser180. Pro residues predominate over residues 183 to 192 (EPAPTIPGPP). A compositionally biased stretch (polar residues) spans 194–203 (QGDSRVSSPS). Low complexity predominate over residues 216–226 (EALLLPHGPLR). Residues Ser345, Ser350, Ser374, Ser381, and Ser384 each carry the phosphoserine modification. Arg386 carries the post-translational modification Omega-N-methylarginine. A compositionally biased stretch (pro residues) spans 436-450 (PPSPLPAPVASPRPF). Omega-N-methylarginine is present on residues Arg466, Arg469, and Arg479. A compositionally biased stretch (polar residues) spans 510–525 (LSSQGPTPLPSFTSGV). Low complexity-rich tracts occupy residues 530 to 545 (PVSGSPSTPRSSGPVT) and 572 to 595 (SAAAMTSTASIFLSAPLRPSARPE). The segment covering 596–607 (APAPGPGAPEPP) has biased composition (pro residues). Ser670 and Ser678 each carry phosphoserine. Positions 697–802 (TLPHVTPKTP…PSLPPSWKYS (106 aa)) are disordered. A compositionally biased stretch (pro residues) spans 704-730 (KTPPPMAPKTPPPMTPKTPPPVAPKPP). Residues Thr705 and Thr713 each carry the phosphothreonine modification. Omega-N-methylarginine is present on Arg757. Pro residues predominate over residues 781-796 (GLGPRPRSPSPTPSLP). A phosphoserine mark is found at Ser788 and Ser790. Thr792 carries the post-translational modification Phosphothreonine. An omega-N-methylarginine mark is found at Arg806, Arg826, and Arg889. Ser891 is modified (phosphoserine). 2 positions are modified to phosphothreonine: Thr892 and Thr898. Omega-N-methylarginine is present on Arg910. Arg921 carries the asymmetric dimethylarginine; alternate modification. Arg921 bears the Omega-N-methylarginine; alternate mark. Residues 922-950 (TELASAPVPSPAPPPEAPRGLGASPSSCG) are disordered. Residues 929–938 (VPSPAPPPEA) are compositionally biased toward pro residues. 2 positions are modified to omega-N-methylarginine: Arg955 and Arg957.

This sequence belongs to the synaptopodin family.

Its subcellular location is the cytoplasm. The protein resides in the cytoskeleton. Functionally, actin-associated protein that may play a role in modulating actin-based shape. The sequence is that of Synaptopodin 2-like protein (SYNPO2L) from Homo sapiens (Human).